A 136-amino-acid chain; its full sequence is ATP synthase epsilon chain (136 aa).

Belongs to the ATPase epsilon chain family. F-type ATPases have 2 components, CF(1) - the catalytic core - and CF(0) - the membrane proton channel. CF(1) has five subunits: alpha(3), beta(3), gamma(1), delta(1), epsilon(1). CF(0) has three main subunits: a, b and c.

Its subcellular location is the cell membrane. Produces ATP from ADP in the presence of a proton gradient across the membrane. This chain is ATP synthase epsilon chain, found in Macrococcus caseolyticus (strain JCSC5402) (Macrococcoides caseolyticum).